Reading from the N-terminus, the 376-residue chain is Erythronate-4-phosphate dehydrogenase (376 aa).

Residues Ser-45 and Thr-67 each coordinate substrate. Position 147 (Asp-147) interacts with NAD(+). Residue Arg-209 is part of the active site. NAD(+) is bound at residue Asp-233. Glu-238 is an active-site residue. Residue His-255 is the Proton donor of the active site. Gly-258 provides a ligand contact to NAD(+). Tyr-259 is a substrate binding site.

This sequence belongs to the D-isomer specific 2-hydroxyacid dehydrogenase family. PdxB subfamily. In terms of assembly, homodimer.

The protein localises to the cytoplasm. It catalyses the reaction 4-phospho-D-erythronate + NAD(+) = (R)-3-hydroxy-2-oxo-4-phosphooxybutanoate + NADH + H(+). Its pathway is cofactor biosynthesis; pyridoxine 5'-phosphate biosynthesis; pyridoxine 5'-phosphate from D-erythrose 4-phosphate: step 2/5. Its function is as follows. Catalyzes the oxidation of erythronate-4-phosphate to 3-hydroxy-2-oxo-4-phosphonooxybutanoate. This chain is Erythronate-4-phosphate dehydrogenase, found in Shewanella sp. (strain MR-4).